A 1642-amino-acid chain; its full sequence is Cobra venom factor (1642 aa).

The first 22 residues, 1-22 (MERMALYLVAALLIGFPGSSHG), serve as a signal peptide directing secretion. N-linked (GlcNAc...) asparagine glycosylation is found at Asn153, Asn158, and Asn209. Residues Pro516, Asp539, Val540, and Asp542 each coordinate Mg(2+). Intrachain disulfides connect Cys544–Cys801, Cys609–Cys644, Cys677–Cys704, Cys678–Cys711, Cys691–Cys712, Cys857–Cys1492, Cys1340–Cys1468, Cys1368–Cys1437, Cys1485–Cys1490, Cys1497–Cys1569, Cys1516–Cys1640, and Cys1616–Cys1625. Residues 650–732 (RRRRSSVLLL…QRESELFLAR (83 aa)) constitute a propeptide that is removed on maturation. The segment at 654–732 (SSVLLLDSNA…QRESELFLAR (79 aa)) is C3a-like domain. The 36-residue stretch at 677–712 (CCEDVMHENPMGYTCEKRAKYIQEGDACKAAFLECC) folds into the Anaphylatoxin-like domain. The factor B binding site stretch occupies residues 736–747 (EDGFIADSDIIS). The propeptide occupies 985 to 1263 (HLIITPSGCG…VMAFQALAEY (279 aa)). The C3d-like domain stretch occupies residues 985–1263 (HLIITPSGCG…VMAFQALAEY (279 aa)). A cross-link (isoglutamyl cysteine thioester (Cys-Gln)) is located at residues 993–996 (CGEQ). The segment at 1190–1253 (VLMAASTGRD…GETYGQTQAT (64 aa)) is factor H binding site. The N-linked (GlcNAc...) asparagine glycan is linked to Asn1346. An NTR domain is found at 1497–1640 (CSSLNHQERI…FSYTLTEFGC (144 aa)).

Belongs to the venom complement C3 homolog family. Heterotrimer of alpha, beta and gamma chains; disulfide-linked. Is active with factor B in the presence of factor D. Post-translationally, first processed by the removal of 4 Arg residues by furin-type protease, forming two chains, alpha and gamma/beta precursor, linked by a disulfide bond. Probably, the cobrin cleaves the C3a-like domain and then the C3d-like domain, generating the mature cobra venom factor (CVF). This mature CVF is composed of three chains: alpha, gamma and beta. In terms of processing, contains 3 N-linked oligosaccharide chains, two in the alpha-chain and one in the beta-chain. Glycosylation is not required for the biological activity. However, it contributes to the immunogenicity of CVF. The carbohydrate content is 7.4. The major oligosaccharide is a symmetric fucosylated biantennary complex-type chain with an unusual alpha-galactosylated Le(x) structure at its non-reducing end. In terms of tissue distribution, expressed by the venom gland.

It localises to the secreted. In terms of biological role, complement-activating protein in cobra venom. It is a structural and functional analog of complement component C3b, the activated form of C3. It binds factor B (CFB), which is subsequently cleaved by factor D (CFD) to form the bimolecular complex CVF/Bb. CVF/Bb is a C3/C5 convertase that cleaves both complement components C3 and C5. Structurally, it resembles the C3b degradation product C3c, which is not able to form a C3/C5 convertase. Unlike C3b/Bb, CVF/Bb is a stable complex and completely resistant to the actions of complement regulatory factors H (CFH) and I (CFI). Therefore, CVF continuously activates complement resulting in the depletion of complement activity. This Naja kaouthia (Monocled cobra) protein is Cobra venom factor.